A 109-amino-acid chain; its full sequence is Urease subunit gamma (109 aa).

It belongs to the urease gamma subunit family. In terms of assembly, heterotrimer of UreA (gamma), UreB (beta) and UreC (alpha) subunits. Three heterotrimers associate to form the active enzyme.

Its subcellular location is the cytoplasm. It catalyses the reaction urea + 2 H2O + H(+) = hydrogencarbonate + 2 NH4(+). Its pathway is nitrogen metabolism; urea degradation; CO(2) and NH(3) from urea (urease route): step 1/1. The polypeptide is Urease subunit gamma (Natronomonas pharaonis (strain ATCC 35678 / DSM 2160 / CIP 103997 / JCM 8858 / NBRC 14720 / NCIMB 2260 / Gabara) (Halobacterium pharaonis)).